Consider the following 364-residue polypeptide: DNA replication and repair protein RecF (364 aa).

Residue 30 to 37 (GLNAQGKS) coordinates ATP.

Belongs to the RecF family.

It localises to the cytoplasm. The RecF protein is involved in DNA metabolism; it is required for DNA replication and normal SOS inducibility. RecF binds preferentially to single-stranded, linear DNA. It also seems to bind ATP. This Caldanaerobacter subterraneus subsp. tengcongensis (strain DSM 15242 / JCM 11007 / NBRC 100824 / MB4) (Thermoanaerobacter tengcongensis) protein is DNA replication and repair protein RecF.